The primary structure comprises 365 residues: L-lactate oxidase (365 aa).

The region spanning Arg6–Cys365 is the FMN hydroxy acid dehydrogenase domain. Tyr32 is a binding site for pyruvate. Residues Pro85–Ala87, Ser114, and Gln135 contribute to the FMN site. Residue Tyr137 coordinates pyruvate. FMN contacts are provided by Thr163, Lys237, and Ser259. Pyruvate-binding residues include His261 and Arg264. The Proton acceptor role is filled by His261. FMN-binding positions include Asp292–Arg296 and Arg316.

The protein belongs to the FMN-dependent alpha-hydroxy acid dehydrogenase family. Homotetramer. FMN serves as cofactor.

It catalyses the reaction (S)-lactate + O2 = pyruvate + H2O2. It carries out the reaction glycolate + O2 = glyoxylate + H2O2. Catalyzes the oxidation of (S)-lactate (L-lactate) to pyruvate, with a reduction of O2 to H2O2. To a lesser extent is also able to use glycolate as substrate. This is L-lactate oxidase from Alicycliphilus denitrificans (strain DSM 14773 / CIP 107495 / K601).